We begin with the raw amino-acid sequence, 1056 residues long: Multidrug resistance protein MdtB (1056 aa).

A run of 12 helical transmembrane segments spans residues 16 to 36, 342 to 362, 373 to 393, 396 to 416, 440 to 460, 472 to 492, 537 to 557, 869 to 889, 890 to 910, 911 to 931, 968 to 988, and 1002 to 1022; these read FILR…AGII, DVQF…YVFL, IAVP…GFSV, LTLM…IVVI, IGFT…PLLF, FAIT…TLTP, WITL…YLTI, LILA…ESFI, HPVT…LALM, VGGY…IGIV, ILMT…STGI, and GGLI…YLLF. Residues 1037-1056 are disordered; sequence LQSQNQRELDHSPVNHQEPL. Residues 1043–1056 show a composition bias toward basic and acidic residues; that stretch reads RELDHSPVNHQEPL.

This sequence belongs to the resistance-nodulation-cell division (RND) (TC 2.A.6) family. MdtB subfamily. As to quaternary structure, part of a tripartite efflux system composed of MdtA, MdtB and MdtC. MdtB forms a heteromultimer with MdtC.

The protein localises to the cell inner membrane. The polypeptide is Multidrug resistance protein MdtB (Xenorhabdus bovienii (strain SS-2004) (Xenorhabdus nematophila subsp. bovienii)).